A 109-amino-acid polypeptide reads, in one-letter code: Probable endoribonuclease MazF5 (109 aa).

The protein belongs to the PemK/MazF family. As to quaternary structure, forms a complex with cognate antitoxin MazE5.

Functionally, toxic component of a type II toxin-antitoxin (TA) system. Upon expression in M.smegmatis inhibits colony formation. Its toxic effect is neutralized by coexpression with cognate antitoxin MazE5. Probably an endoribonuclease. This is Probable endoribonuclease MazF5 (mazF5) from Mycobacterium tuberculosis (strain ATCC 25618 / H37Rv).